A 270-amino-acid polypeptide reads, in one-letter code: Small ribosomal subunit protein eS1 (270 aa).

2 disordered regions span residues 1 to 21 (MAVG…KKKV) and 238 to 270 (GGGK…QESV).

This sequence belongs to the eukaryotic ribosomal protein eS1 family. Component of the small ribosomal subunit. Mature ribosomes consist of a small (40S) and a large (60S) subunit. The 40S subunit contains about 33 different proteins and 1 molecule of RNA (18S). The 60S subunit contains about 49 different proteins and 3 molecules of RNA (28S, 5.8S and 5S).

It is found in the cytoplasm. The polypeptide is Small ribosomal subunit protein eS1 (Aedes aegypti (Yellowfever mosquito)).